Here is a 215-residue protein sequence, read N- to C-terminus: Agamous-like MADS-box protein AGL63 (215 aa).

Residues 1 to 61 (MRKGKRVIKK…NRLYDFCSNS (61 aa)) form the MADS-box domain. A K-box domain is found at 90 to 178 (CSDCVKTKES…GSSWEQLMWQ (89 aa)). Disordered regions lie at residues 143–172 (ARKS…GSSW) and 184–215 (MTCQ…SSPP).

Forms homodimer. Interacts with AGL16. As to expression, expressed in bud pedicels, petals, anthers, style, ovary, seeds and embryos.

It localises to the nucleus. Probable transcription factor involved in the regulation of fruit growth. Contributes to integument development. Controls organ size via cell expansion. Involved in the regulation of longitudinal growth of the fruit evenly throughout the radial axis. Functions redundantly with TT16/AGL32 to repress nucellus growth and promote its degeneration. This chain is Agamous-like MADS-box protein AGL63, found in Arabidopsis thaliana (Mouse-ear cress).